The primary structure comprises 197 residues: MIKLEQLVLASHNAGKLKELQAMLGASVKVRSIGEFSQVEPEETGLSFVENAILKARNAARLSGLPALADDSGLAVDFLGGAPGIYSARYADGRGDAANNAKLLEAMKDVPDAERGAQFVSVLALVRHADDPLPILCEGIWEGRILREARGAHGFGYDPLFWVPERDCSSAELAPEEKNRLSHRARAMALLKQRLGL.

Substrate is bound at residue 11 to 16 (SHNAGK). Mg(2+) contacts are provided by glutamate 42 and aspartate 71. The Proton acceptor role is filled by aspartate 71. Residues serine 72, 155–158 (FGYD), lysine 178, and 183–184 (HR) each bind substrate.

This sequence belongs to the HAM1 NTPase family. As to quaternary structure, homodimer. It depends on Mg(2+) as a cofactor.

It catalyses the reaction XTP + H2O = XMP + diphosphate + H(+). The catalysed reaction is dITP + H2O = dIMP + diphosphate + H(+). It carries out the reaction ITP + H2O = IMP + diphosphate + H(+). Pyrophosphatase that catalyzes the hydrolysis of nucleoside triphosphates to their monophosphate derivatives, with a high preference for the non-canonical purine nucleotides XTP (xanthosine triphosphate), dITP (deoxyinosine triphosphate) and ITP. Seems to function as a house-cleaning enzyme that removes non-canonical purine nucleotides from the nucleotide pool, thus preventing their incorporation into DNA/RNA and avoiding chromosomal lesions. The chain is dITP/XTP pyrophosphatase from Pseudomonas aeruginosa (strain ATCC 15692 / DSM 22644 / CIP 104116 / JCM 14847 / LMG 12228 / 1C / PRS 101 / PAO1).